A 246-amino-acid chain; its full sequence is Aquaporin SIP1-1 (246 aa).

2 consecutive transmembrane segments (helical) span residues 13–33 (AAVT…TAAV) and 45–65 (YALL…NLLC). The NPA 1 motif lies at 74 to 76 (NPT). 3 consecutive transmembrane segments (helical) span residues 95 to 115 (FPLA…AMAI), 139 to 159 (GAAA…WIIV), and 166 to 186 (IVKT…GAAY). An NPA 2 motif is present at residues 192-194 (NPA). Residues 214–234 (VYWICPFVGAVLAAWVFRAVF) traverse the membrane as a helical segment.

Belongs to the MIP/aquaporin (TC 1.A.8) family. SIP (TC 1.A.8.10) subfamily. Expressed in roots, leaves and anthers.

It is found in the membrane. Its function is as follows. Aquaporins facilitate the transport of water and small neutral solutes across cell membranes. This is Aquaporin SIP1-1 (SIP1-1) from Oryza sativa subsp. japonica (Rice).